A 313-amino-acid chain; its full sequence is 3-O-acetylpapaveroxine carboxylesterase CXE2 (313 aa).

The Involved in the stabilization of the negatively charged intermediate by the formation of the oxyanion hole motif lies at 72 to 74 (HGG). Residues serine 158, aspartate 262, and histidine 292 contribute to the active site.

It belongs to the 'GDXG' lipolytic enzyme family.

It catalyses the reaction 3-O-acetylpapaveroxine + H2O = narcotine hemiacetal + acetate + H(+). Its pathway is alkaloid biosynthesis. Its function is as follows. Carboxylesterase involved in the biosynthesis of the benzylisoquinoline alkaloid noscapine. Converts 3-O-acetylpapaveroxine to narcotine hemiacetal. The chain is 3-O-acetylpapaveroxine carboxylesterase CXE2 from Papaver somniferum (Opium poppy).